The following is a 155-amino-acid chain: Large ribosomal subunit protein uL16 (155 aa).

It belongs to the universal ribosomal protein uL16 family. As to quaternary structure, part of the 50S ribosomal subunit.

Functionally, binds 23S rRNA and is also seen to make contacts with the A and possibly P site tRNAs. The sequence is that of Large ribosomal subunit protein uL16 from Synechococcus sp. (strain CC9311).